Consider the following 330-residue polypeptide: Flotillin-like protein FloA (330 aa).

Transmembrane regions (helical) follow at residues 6-26 (LFLL…FTFV) and 28-48 (VMLW…TLIG).

It belongs to the flotillin-like FloA family. Homooligomerizes.

It is found in the cell membrane. The protein localises to the membrane raft. Its function is as follows. Found in functional membrane microdomains (FMM) that may be equivalent to eukaryotic membrane rafts. FMMs are highly dynamic and increase in number as cells age. Flotillins are thought to be important factors in membrane fluidity. The chain is Flotillin-like protein FloA from Bacillus licheniformis (strain ATCC 14580 / DSM 13 / JCM 2505 / CCUG 7422 / NBRC 12200 / NCIMB 9375 / NCTC 10341 / NRRL NRS-1264 / Gibson 46).